Here is a 293-residue protein sequence, read N- to C-terminus: Acetyl-coenzyme A carboxylase carboxyl transferase subunit beta (293 aa).

The CoA carboxyltransferase N-terminal domain maps to Leu-29–Thr-293. 4 residues coordinate Zn(2+): Cys-33, Cys-36, Cys-52, and Cys-55. The segment at Cys-33–Cys-55 adopts a C4-type zinc-finger fold.

It belongs to the AccD/PCCB family. Acetyl-CoA carboxylase is a heterohexamer composed of biotin carboxyl carrier protein (AccB), biotin carboxylase (AccC) and two subunits each of ACCase subunit alpha (AccA) and ACCase subunit beta (AccD). It depends on Zn(2+) as a cofactor.

Its subcellular location is the cytoplasm. It catalyses the reaction N(6)-carboxybiotinyl-L-lysyl-[protein] + acetyl-CoA = N(6)-biotinyl-L-lysyl-[protein] + malonyl-CoA. Its pathway is lipid metabolism; malonyl-CoA biosynthesis; malonyl-CoA from acetyl-CoA: step 1/1. Functionally, component of the acetyl coenzyme A carboxylase (ACC) complex. Biotin carboxylase (BC) catalyzes the carboxylation of biotin on its carrier protein (BCCP) and then the CO(2) group is transferred by the transcarboxylase to acetyl-CoA to form malonyl-CoA. This Prochlorococcus marinus (strain MIT 9301) protein is Acetyl-coenzyme A carboxylase carboxyl transferase subunit beta.